We begin with the raw amino-acid sequence, 681 residues long: Sodium-dependent phosphate transporter 1 (681 aa).

Helical transmembrane passes span 25–45 (NLWM…SVGA), 66–86 (ACIL…AKVS), 106–126 (LMAG…VASF), 162–182 (IVMS…ILFF), 201–221 (ALPI…MYTG), and 234–254 (GTIL…WFFV). The segment at 266–295 (VKSSPSESPLMEKKSNLKEDHEETKMAPGD) is disordered. Residues Ser269 and Ser273 each carry the phosphoserine modification. Positions 275–295 (LMEKKSNLKEDHEETKMAPGD) are enriched in basic and acidic residues. Residues 514–534 (VSLLFQFLQILTACFGSFAHG) form a helical membrane-spanning segment. The interval 553–560 (KQEASTKA) is a. Helical transmembrane passes span 561-581 (ATPI…LWVW), 602-622 (FSIE…GLPI), and 652-672 (IFMA…AIMA).

It belongs to the inorganic phosphate transporter (PiT) (TC 2.A.20) family. Ubiquitously expressed.

Its subcellular location is the cell membrane. The enzyme catalyses 2 Na(+)(out) + phosphate(out) = 2 Na(+)(in) + phosphate(in). Functionally, sodium-phosphate symporter which preferentially transports the monovalent form of phosphate with a stoichiometry of two sodium ions per phosphate ion. May play a role in extracellular matrix and cartilage calcification as well as in vascular calcification. Essential for cell proliferation but this function is independent of its phosphate transporter activity. In terms of biological role, (Microbial infection) May function as a retroviral receptor but do not confer infection susceptibility to Gibbon Ape Leukemia Virus (GaLV), Simian sarcoma-associated virus (SSAV) and Feline leukemia virus subgroup B (FeLV-B). In Mus musculus (Mouse), this protein is Sodium-dependent phosphate transporter 1 (Slc20a1).